A 325-amino-acid chain; its full sequence is tRNA U34 carboxymethyltransferase (325 aa).

Residues Lys91, Trp105, Lys110, Gly130, 152–154 (DPS), Met196, Tyr200, and Arg315 contribute to the carboxy-S-adenosyl-L-methionine site.

It belongs to the class I-like SAM-binding methyltransferase superfamily. CmoB family. In terms of assembly, homotetramer.

The enzyme catalyses carboxy-S-adenosyl-L-methionine + 5-hydroxyuridine(34) in tRNA = 5-carboxymethoxyuridine(34) in tRNA + S-adenosyl-L-homocysteine + H(+). Functionally, catalyzes carboxymethyl transfer from carboxy-S-adenosyl-L-methionine (Cx-SAM) to 5-hydroxyuridine (ho5U) to form 5-carboxymethoxyuridine (cmo5U) at position 34 in tRNAs. This Aeromonas hydrophila subsp. hydrophila (strain ATCC 7966 / DSM 30187 / BCRC 13018 / CCUG 14551 / JCM 1027 / KCTC 2358 / NCIMB 9240 / NCTC 8049) protein is tRNA U34 carboxymethyltransferase.